Consider the following 5085-residue polypeptide: Linear gramicidin synthase subunit D (5085 aa).

Carrier domains lie at 962-1037, 2023-2097, 3544-3619, and 4601-4676; these read APRT…AAAG, SPST…EEKA, APRN…ELLT, and APQT…EEII. O-(pantetheine 4'-phosphoryl)serine is present on residues Ser997, Ser2058, Ser3579, and Ser4636.

This sequence belongs to the ATP-dependent AMP-binding enzyme family. Large multienzyme complex composed of 4 subunits; LgrA, LgrB, LgrC and LgrD. Pantetheine 4'-phosphate serves as cofactor.

In terms of biological role, activates the 13th to the 16th (Trp, D-Leu, Trp and Gly) amino acids in linear gramicidin and catalyzes the formation of the peptide bond between them. This enzyme is also responsible for the epimerization of the 14th (D-Leu) amino acid. It also catalyzes the NAD(P)H-dependent reduction of the C-terminal glycine residue of the N-formylated 16-mer peptide, that binds to the peptidyl carrier domain of the terminal module of this protein, to form a peptidyl-aldehyde intermediate that is released from the enzyme complex. The chain is Linear gramicidin synthase subunit D (lgrD) from Brevibacillus parabrevis.